The sequence spans 357 residues: DNA polymerase IV (357 aa).

In terms of domain architecture, UmuC spans 4–185; it reads IIHCDCDCFY…LPVERLFGVG (182 aa). Mg(2+) is bound by residues D8 and D103. The active site involves E104.

Belongs to the DNA polymerase type-Y family. As to quaternary structure, monomer. Mg(2+) is required as a cofactor.

The protein localises to the cytoplasm. The catalysed reaction is DNA(n) + a 2'-deoxyribonucleoside 5'-triphosphate = DNA(n+1) + diphosphate. In terms of biological role, poorly processive, error-prone DNA polymerase involved in untargeted mutagenesis. Copies undamaged DNA at stalled replication forks, which arise in vivo from mismatched or misaligned primer ends. These misaligned primers can be extended by PolIV. Exhibits no 3'-5' exonuclease (proofreading) activity. May be involved in translesional synthesis, in conjunction with the beta clamp from PolIII. The sequence is that of DNA polymerase IV from Ralstonia nicotianae (strain ATCC BAA-1114 / GMI1000) (Ralstonia solanacearum).